Here is a 531-residue protein sequence, read N- to C-terminus: Cytochrome c oxidase subunit 1 (531 aa).

Residues 18–38 (ILYLIYGMVSAMVATGMSVII) form a helical membrane-spanning segment. 2 residues coordinate Ca(2+): E41 and G46. 6 helical membrane passes run 59 to 79 (VLVT…ILIG), 103 to 123 (ISFW…LIET), 149 to 169 (AIFA…NFIV), 185 to 205 (PLFV…LPVL), 237 to 257 (LFYF…FGII), and 269 to 289 (IFGQ…GFLV). H64 is a Fe(II)-heme a binding site. A Cu cation-binding site is contributed by H243. The segment at residues 243–247 (HPEVY) is a cross-link (1'-histidyl-3'-tyrosine (His-Tyr)). Residue Y247 coordinates O2. Residues H292 and H293 each coordinate Cu cation. Helical transmembrane passes span 312–332 (MVIA…LYGG) and 340–360 (MLFA…GVML). H370 and D371 together coordinate Mg(2+). Position 378 (H378) interacts with heme a3. H380 is a Fe(II)-heme a binding site. Helical transmembrane passes span 385–405 (MGAL…MFGL) and 414–434 (VHYW…HFLG). P443 contacts Ca(2+). Residues 458 to 478 (WGSIMSVISVLIGLYSVLVQL) form a helical membrane-spanning segment.

Belongs to the heme-copper respiratory oxidase family. Component of the cytochrome c oxidase (complex IV, CIV), a multisubunit enzyme composed of a catalytic core of 3 subunits and several supernumerary subunits. The complex exists as a monomer or a dimer and forms supercomplexes (SCs) in the inner mitochondrial membrane with ubiquinol-cytochrome c oxidoreductase (cytochrome b-c1 complex, complex III, CIII). Heme is required as a cofactor. The cofactor is Cu cation.

Its subcellular location is the mitochondrion inner membrane. It carries out the reaction 4 Fe(II)-[cytochrome c] + O2 + 8 H(+)(in) = 4 Fe(III)-[cytochrome c] + 2 H2O + 4 H(+)(out). Its pathway is energy metabolism; oxidative phosphorylation. Component of the cytochrome c oxidase, the last enzyme in the mitochondrial electron transport chain which drives oxidative phosphorylation. The respiratory chain contains 3 multisubunit complexes succinate dehydrogenase (complex II, CII), ubiquinol-cytochrome c oxidoreductase (cytochrome b-c1 complex, complex III, CIII) and cytochrome c oxidase (complex IV, CIV), that cooperate to transfer electrons derived from NADH and succinate to molecular oxygen, creating an electrochemical gradient over the inner membrane that drives transmembrane transport and the ATP synthase. Cytochrome c oxidase is the component of the respiratory chain that catalyzes the reduction of oxygen to water. Electrons originating from reduced cytochrome c in the intermembrane space (IMS) are transferred via the dinuclear copper A center (CU(A)) of subunit 2 and heme A of subunit 1 to the active site in subunit 1, a binuclear center (BNC) formed by heme A3 and copper B (CU(B)). The BNC reduces molecular oxygen to 2 water molecules using 4 electrons from cytochrome c in the IMS and 4 protons from the mitochondrial matrix. This is Cytochrome c oxidase subunit 1 (COX1) from Candida albicans (strain SC5314 / ATCC MYA-2876) (Yeast).